The following is a 243-amino-acid chain: Triosephosphate isomerase (243 aa).

Residue 9-11 coordinates substrate; it reads NWK. The active-site Electrophile is histidine 96. Glutamate 165 (proton acceptor) is an active-site residue. Substrate-binding positions include glycine 171, serine 204, and 225–226; that span reads GG.

This sequence belongs to the triosephosphate isomerase family. In terms of assembly, homodimer.

It is found in the cytoplasm. The catalysed reaction is D-glyceraldehyde 3-phosphate = dihydroxyacetone phosphate. It functions in the pathway carbohydrate biosynthesis; gluconeogenesis. The protein operates within carbohydrate degradation; glycolysis; D-glyceraldehyde 3-phosphate from glycerone phosphate: step 1/1. Involved in the gluconeogenesis. Catalyzes stereospecifically the conversion of dihydroxyacetone phosphate (DHAP) to D-glyceraldehyde-3-phosphate (G3P). This Parasynechococcus marenigrum (strain WH8102) protein is Triosephosphate isomerase.